Reading from the N-terminus, the 393-residue chain is Peptidyl-prolyl cis-trans isomerase CYP7 (393 aa).

The 189-residue stretch at 8–196 (YLDISIDKKP…SDVRISDCGV (189 aa)) folds into the PPIase cyclophilin-type domain. TPR repeat units lie at residues 240–273 (ANII…INEY), 292–325 (MKIY…DNVP), and 330–363 (AKAY…NPDD).

Interacts with RPD3 and CNS1.

It carries out the reaction [protein]-peptidylproline (omega=180) = [protein]-peptidylproline (omega=0). In terms of biological role, PPIases accelerate the folding of proteins. It catalyzes the cis-trans isomerization of proline imidic peptide bonds in oligopeptides. Plays a major role in negative regulation of the heat shock transcription factor (HSF). This chain is Peptidyl-prolyl cis-trans isomerase CYP7 (CPR7), found in Saccharomyces cerevisiae (strain ATCC 204508 / S288c) (Baker's yeast).